Reading from the N-terminus, the 739-residue chain is Adenosylcobalamin-dependent ribonucleoside-triphosphate reductase (739 aa).

The cysteines at positions 119 and 419 are disulfide-linked. The effector region-1 stretch occupies residues 147–158; the sequence is SMPFSFLFDELM. Residues 168 to 313 form an effector region-2 region; the sequence is ARSNISQIPR…ICNLIGKAVV (146 aa). Catalysis depends on residues C408 and E410. The adenosylcobalamin-binding-1 stretch occupies residues 565-626; sequence FHYGAYLIQR…NPNFASAGTV (62 aa). The interval 685 to 724 is adenosylcobalamin-binding-2; the sequence is LQQAPKEPIDKETYEKRSQEITGNVEEVFSQLNSDVKDLE.

The protein belongs to the class II ribonucleoside-triphosphate reductase family. As to quaternary structure, monomer. It depends on adenosylcob(III)alamin as a cofactor.

The enzyme catalyses a 2'-deoxyribonucleoside 5'-triphosphate + [thioredoxin]-disulfide + H2O = a ribonucleoside 5'-triphosphate + [thioredoxin]-dithiol. Its activity is regulated as follows. Allosterically regulated by ATP and dNTP. The protein is Adenosylcobalamin-dependent ribonucleoside-triphosphate reductase (rtpR) of Lactobacillus delbrueckii subsp. bulgaricus (strain ATCC 11842 / DSM 20081 / BCRC 10696 / JCM 1002 / NBRC 13953 / NCIMB 11778 / NCTC 12712 / WDCM 00102 / Lb 14).